Consider the following 125-residue polypeptide: MQCIRCPAILALLALVLCGPSVSSQLDREQSDNQDLDLELRQHWLLERARSAGLLSQEWSKRAVEELLAQMSLPEADVQREAEDASMATGGRMNLERSVDSTNNLPPRERKAGCKNFYWKGFTSC.

The N-terminal stretch at 1–24 (MQCIRCPAILALLALVLCGPSVSS) is a signal peptide. Pyrrolidone carboxylic acid is present on Gln-25. Residues 25–97 (QLDREQSDNQ…ATGGRMNLER (73 aa)) constitute a propeptide that is removed on maturation. The disordered stretch occupies residues 82-107 (AEDASMATGGRMNLERSVDSTNNLPP). A disulfide bridge links Cys-114 with Cys-125. A 5-hydroxylysine modification is found at Lys-120.

This sequence belongs to the somatostatin family.

It localises to the secreted. Somatostatin inhibits the release of somatotropin. This is Somatostatin-2 (sst2) from Lophius americanus (American angler).